The following is a 343-amino-acid chain: Heat-inducible transcription repressor HrcA (343 aa).

Belongs to the HrcA family.

Functionally, negative regulator of class I heat shock genes (grpE-dnaK-dnaJ and groELS operons). Prevents heat-shock induction of these operons. The polypeptide is Heat-inducible transcription repressor HrcA (Bacillus subtilis (strain 168)).